The sequence spans 251 residues: Segregation and condensation protein A (251 aa).

The protein belongs to the ScpA family. Component of a cohesin-like complex composed of ScpA, ScpB and the Smc homodimer, in which ScpA and ScpB bind to the head domain of Smc. The presence of the three proteins is required for the association of the complex with DNA.

The protein resides in the cytoplasm. In terms of biological role, participates in chromosomal partition during cell division. May act via the formation of a condensin-like complex containing Smc and ScpB that pull DNA away from mid-cell into both cell halves. This Clostridium botulinum (strain Eklund 17B / Type B) protein is Segregation and condensation protein A.